The primary structure comprises 79 residues: Putative antitoxin MM_2475 (79 aa).

The protein belongs to the UPF0330 family.

In terms of biological role, possibly the antitoxin component of a type II toxin-antitoxin (TA) system. The protein is Putative antitoxin MM_2475 of Methanosarcina mazei (strain ATCC BAA-159 / DSM 3647 / Goe1 / Go1 / JCM 11833 / OCM 88) (Methanosarcina frisia).